A 471-amino-acid chain; its full sequence is Putative multidrug resistance protein MdtD (471 aa).

Residues methionine 1 to glutamine 11 are Periplasmic-facing. The chain crosses the membrane as a helical span at residues leucine 12–alanine 32. Residues leucine 33–histidine 48 are Cytoplasmic-facing. The helical transmembrane segment at methionine 49–alanine 69 threads the bilayer. At aspartate 70–asparagine 76 the chain is on the periplasmic side. A helical membrane pass occupies residues isoleucine 77–threonine 97. The Cytoplasmic portion of the chain corresponds to leucine 98–leucine 101. The helical transmembrane segment at leucine 102–methionine 124 threads the bilayer. The Periplasmic portion of the chain corresponds to lysine 125 to threonine 137. The chain crosses the membrane as a helical span at residues phenylalanine 138–valine 158. The Cytoplasmic portion of the chain corresponds to glutamate 159–histidine 164. Residues tryptophan 165–methionine 185 form a helical membrane-spanning segment. At proline 186 to aspartate 196 the chain is on the periplasmic side. The chain crosses the membrane as a helical span at residues leucine 197–serine 217. Residues lysine 218–proline 224 lie on the Cytoplasmic side of the membrane. The helical transmembrane segment at leucine 225 to alanine 245 threads the bilayer. Residues arginine 246–threonine 262 lie on the Periplasmic side of the membrane. Residues phenylalanine 263–methionine 283 form a helical membrane-spanning segment. The Cytoplasmic portion of the chain corresponds to threonine 284–proline 285. The chain crosses the membrane as a helical span at residues valine 286–methionine 306. Residues valine 307 to threonine 341 are Periplasmic-facing. The chain crosses the membrane as a helical span at residues leucine 342–leucine 362. The Cytoplasmic portion of the chain corresponds to glutamine 363 to serine 395. The chain crosses the membrane as a helical span at residues methionine 396–phenylalanine 416. Over glycine 417 to threonine 430 the chain is Periplasmic. The chain crosses the membrane as a helical span at residues valine 431–alanine 451. Residues arginine 452 to glutamine 471 lie on the Cytoplasmic side of the membrane.

This sequence belongs to the major facilitator superfamily. TCR/Tet family.

It localises to the cell inner membrane. In Escherichia coli (strain 55989 / EAEC), this protein is Putative multidrug resistance protein MdtD.